The chain runs to 472 residues: Eukaryotic translation initiation factor 2 subunit 3 (472 aa).

Residue Ala-2 is modified to N-acetylalanine. Residue Ser-16 is modified to Phosphoserine. In terms of domain architecture, tr-type G spans Gln-39–Arg-248. Residues Gly-48 to Ser-55 form a G1 region. Residue Ala-51–Thr-56 coordinates GTP. The segment at Asn-76–Lys-80 is G2. The interval Asp-134–Gly-137 is G3. GTP contacts are provided by residues Asn-190–Asp-193 and Ser-225–Gln-227. The interval Asn-190–Asp-193 is G4. A G5 region spans residues Ser-225 to Gln-227. Residues Gly-457–Val-469 form an interacts with CDC123 region.

This sequence belongs to the TRAFAC class translation factor GTPase superfamily. Classic translation factor GTPase family. EIF2G subfamily. Eukaryotic translation initiation factor 2 eIF2 is a heterotrimeric complex composed of an alpha (EIF2S1), a beta (EIF2S2) and a gamma (EIF2S3) chain. eIF2 is member of the 43S pre-initiation complex (43S PIC). Interacts (via C-terminus) with CDC123; the interaction is direct.

It localises to the cytoplasm. Its subcellular location is the cytosol. It catalyses the reaction GTP + H2O = GDP + phosphate + H(+). Member of the eIF2 complex that functions in the early steps of protein synthesis by forming a ternary complex with GTP and initiator tRNA. This complex binds to a 40S ribosomal subunit, followed by mRNA binding to form the 43S pre-initiation complex (43S PIC). Junction of the 60S ribosomal subunit to form the 80S initiation complex is preceded by hydrolysis of the GTP bound to eIF2 and release of an eIF2-GDP binary complex. In order for eIF2 to recycle and catalyze another round of initiation, the GDP bound to eIF2 must exchange with GTP by way of a reaction catalyzed by eIF-2B. The protein is Eukaryotic translation initiation factor 2 subunit 3 (EIF2S3) of Sus scrofa (Pig).